The following is a 546-amino-acid chain: Thermolysin (546 aa).

The first 25 residues, 1-25, serve as a signal peptide directing secretion; the sequence is MNKRAMLGAIGLAFGLMAWPFGASA. The propeptide at 26–228 is activation peptide; it reads KEKSMVWNEQ…EAKPGGGQPV (203 aa). Residues Asp287, Asp289, Gln291, and Asp368 each coordinate Ca(2+). Position 372 (His372) interacts with Zn(2+). Glu373 is an active-site residue. Positions 376 and 396 each coordinate Zn(2+). Residues Glu407, Asn413, Asp415, Glu417, Glu420, Tyr423, Thr424, Ile427, and Asp430 each contribute to the Ca(2+) site. His461 acts as the Proton donor in catalysis.

This sequence belongs to the peptidase M4 family. It depends on Ca(2+) as a cofactor. Zn(2+) serves as cofactor.

It is found in the secreted. It catalyses the reaction Preferential cleavage: Xaa-|-Leu &gt; Xaa-|-Phe.. Its function is as follows. Extracellular zinc metalloprotease. This chain is Thermolysin, found in Alicyclobacillus acidocaldarius subsp. acidocaldarius (Bacillus acidocaldarius).